We begin with the raw amino-acid sequence, 124 residues long: Small ribosomal subunit protein uS12c (124 aa).

Disordered regions lie at residues 1-28 (MPTI…QSCP) and 104-124 (AAGV…KPKS). 2 stretches are compositionally biased toward basic residues: residues 11-20 (ERRKIHKKTK) and 109-124 (DRRK…KPKS).

This sequence belongs to the universal ribosomal protein uS12 family. As to quaternary structure, part of the 30S ribosomal subunit.

Its subcellular location is the plastid. It localises to the chloroplast. In terms of biological role, with S4 and S5 plays an important role in translational accuracy. Located at the interface of the 30S and 50S subunits. In Pyropia yezoensis (Susabi-nori), this protein is Small ribosomal subunit protein uS12c (rps12).